The primary structure comprises 155 residues: Small ribosomal subunit protein uS7c (155 aa).

It belongs to the universal ribosomal protein uS7 family. In terms of assembly, part of the 30S ribosomal subunit.

Its subcellular location is the plastid. It is found in the chloroplast. Its function is as follows. One of the primary rRNA binding proteins, it binds directly to 16S rRNA where it nucleates assembly of the head domain of the 30S subunit. The sequence is that of Small ribosomal subunit protein uS7c (rps7) from Staurastrum punctulatum (Green alga).